Consider the following 112-residue polypeptide: Putative pterin-4-alpha-carbinolamine dehydratase (112 aa).

This sequence belongs to the pterin-4-alpha-carbinolamine dehydratase family.

The enzyme catalyses (4aS,6R)-4a-hydroxy-L-erythro-5,6,7,8-tetrahydrobiopterin = (6R)-L-erythro-6,7-dihydrobiopterin + H2O. This is Putative pterin-4-alpha-carbinolamine dehydratase from Shewanella putrefaciens (strain CN-32 / ATCC BAA-453).